The chain runs to 323 residues: Dehydrogenase/reductase SDR family member 7B (323 aa).

Topologically, residues 1–17 (MISPSFRKGMLKERVMD) are cytoplasmic. A helical; Signal-anchor for type II membrane protein membrane pass occupies residues 18–38 (LASQTTILPLLFGCLGIFSLF). Residues 39-323 (RLLQRIRSKA…ARKERKSKSS (285 aa)) are Lumenal-facing. Residues Ser-62 and Leu-64 each coordinate NAD(+). Substrate is bound at residue Ser-192. Residues Tyr-205, Lys-209, and Thr-240 each coordinate NAD(+). The active-site Proton acceptor is the Tyr-205.

The protein belongs to the short-chain dehydrogenases/reductases (SDR) family.

Its subcellular location is the endoplasmic reticulum membrane. Its function is as follows. Putative oxidoreductase. This is Dehydrogenase/reductase SDR family member 7B from Mus musculus (Mouse).